A 236-amino-acid chain; its full sequence is uncharacterized protein (236 aa).

A helical transmembrane segment spans residues 52-72 (FFPYIALFQIIMLIILLILYF). The segment at 183-236 (SDKREHDDEELSFTTEMETITTETETSSTIPHLRSLPIKSESSMETTSEETDEE) is disordered. The segment covering 196–212 (TTEMETITTETETSSTI) has biased composition (low complexity).

The protein resides in the membrane. This is an uncharacterized protein from Acheta domesticus (House cricket).